Here is a 161-residue protein sequence, read N- to C-terminus: MGTTWRSPGRLRLALCLAGLALSLYALHVKAARARNEDYRALCDVGTAISCSRVFSSRWGRGFGLVEHVLGADSILNQSNSIFGCMFYTIQLLLGCLRGRWASILLILSSLVSVAGSLYLAWILFFVLYDFCIVCITTYAINAGLMLLSFQKVPEHKVKKP.

The Cytoplasmic portion of the chain corresponds to 1-9 (MGTTWRSPG). The chain crosses the membrane as a helical span at residues 10–29 (RLRLALCLAGLALSLYALHV). The Lumenal segment spans residues 30–80 (KAARARNEDYRALCDVGTAISCSRVFSSRWGRGFGLVEHVLGADSILNQSN). A disulfide bond links cysteine 43 and cysteine 51. Asparagine 80 is a binding site for (S)-warfarin. A helical membrane pass occupies residues 81-95 (SIFGCMFYTIQLLLG). Over 96-100 (CLRGR) the chain is Cytoplasmic. A helical membrane pass occupies residues 101 to 128 (WASILLILSSLVSVAGSLYLAWILFFVL). Over 129–131 (YDF) the chain is Lumenal. An intrachain disulfide couples cysteine 132 to cysteine 135. Residues 132–153 (CIVCITTYAINAGLMLLSFQKV) form a helical membrane-spanning segment. Residues cysteine 135 and tyrosine 139 each contribute to the phylloquinone site. Tyrosine 139 lines the (S)-warfarin pocket. Residues 154-161 (PEHKVKKP) are Cytoplasmic-facing.

The protein belongs to the VKOR family. As to expression, highly expressed in liver. Detected at lower levels in lung, kidney and testis.

The protein resides in the endoplasmic reticulum membrane. The catalysed reaction is phylloquinone + [protein]-disulfide + H2O = 2,3-epoxyphylloquinone + [protein]-dithiol. It carries out the reaction phylloquinol + [protein]-disulfide = phylloquinone + [protein]-dithiol. With respect to regulation, inhibited by warfarin (coumadin). Warfarin locks VKORC1 in both redox states into the closed conformation. In terms of biological role, involved in vitamin K metabolism. Catalytic subunit of the vitamin K epoxide reductase (VKOR) complex which reduces inactive vitamin K 2,3-epoxide to active vitamin K. Vitamin K is required for the gamma-carboxylation of various proteins, including clotting factors, and is required for normal blood coagulation, but also for normal bone development. The protein is Vitamin K epoxide reductase complex subunit 1 (Vkorc1) of Rattus norvegicus (Rat).